A 455-amino-acid chain; its full sequence is Ribulose bisphosphate carboxylase large chain (455 aa).

Residue K5 is modified to N6,N6,N6-trimethyllysine. N114 and T164 together coordinate substrate. K166 (proton acceptor) is an active-site residue. K168 contributes to the substrate binding site. The Mg(2+) site is built by K192, D194, and E195. K192 is modified (N6-carboxylysine). H285 acts as the Proton acceptor in catalysis. Substrate is bound by residues R286, H318, and S370.

Belongs to the RuBisCO large chain family. Type I subfamily. Heterohexadecamer of 8 large chains and 8 small chains; disulfide-linked. The disulfide link is formed within the large subunit homodimers. Mg(2+) serves as cofactor. In terms of processing, the disulfide bond which can form in the large chain dimeric partners within the hexadecamer appears to be associated with oxidative stress and protein turnover.

It is found in the plastid. The protein resides in the chloroplast. It carries out the reaction 2 (2R)-3-phosphoglycerate + 2 H(+) = D-ribulose 1,5-bisphosphate + CO2 + H2O. The catalysed reaction is D-ribulose 1,5-bisphosphate + O2 = 2-phosphoglycolate + (2R)-3-phosphoglycerate + 2 H(+). Its function is as follows. RuBisCO catalyzes two reactions: the carboxylation of D-ribulose 1,5-bisphosphate, the primary event in carbon dioxide fixation, as well as the oxidative fragmentation of the pentose substrate in the photorespiration process. Both reactions occur simultaneously and in competition at the same active site. The protein is Ribulose bisphosphate carboxylase large chain of Lupinus digitatus (Lupine).